The following is a 592-amino-acid chain: V-type ATP synthase alpha chain (592 aa).

233–240 (GPFGSGKT) contacts ATP.

It belongs to the ATPase alpha/beta chains family.

The enzyme catalyses ATP + H2O + 4 H(+)(in) = ADP + phosphate + 5 H(+)(out). In terms of biological role, produces ATP from ADP in the presence of a proton gradient across the membrane. The V-type alpha chain is a catalytic subunit. This Clostridium botulinum (strain Okra / Type B1) protein is V-type ATP synthase alpha chain.